A 339-amino-acid polypeptide reads, in one-letter code: 3-isopropylmalate dehydrogenase (339 aa).

Substrate contacts are provided by Arg87, Arg97, Arg124, and Asp214. Mg(2+)-binding residues include Asp214, Asp238, and Asp242. Residue 274 to 286 (GSAPDIAGQGIAD) participates in NAD(+) binding.

The protein belongs to the isocitrate and isopropylmalate dehydrogenases family. LeuB type 2 subfamily. Homodimer. Mg(2+) is required as a cofactor. Requires Mn(2+) as cofactor.

It is found in the cytoplasm. It carries out the reaction (2R,3S)-3-isopropylmalate + NAD(+) = 4-methyl-2-oxopentanoate + CO2 + NADH. It participates in amino-acid biosynthesis; L-leucine biosynthesis; L-leucine from 3-methyl-2-oxobutanoate: step 3/4. Catalyzes the oxidation of 3-carboxy-2-hydroxy-4-methylpentanoate (3-isopropylmalate) to 3-carboxy-4-methyl-2-oxopentanoate. The product decarboxylates to 4-methyl-2 oxopentanoate. The sequence is that of 3-isopropylmalate dehydrogenase from Mycobacterium marinum (strain ATCC BAA-535 / M).